The following is a 224-amino-acid chain: Ion-translocating oxidoreductase complex subunit E (224 aa).

Helical transmembrane passes span 51–71 (LGLG…VSLF), 81–101 (IPIY…LMNA), 105–125 (SLYQ…IVIG), 140–160 (MFDG…LGAI), and 194–214 (HFLL…ILAI).

The protein belongs to the NqrDE/RnfAE family. In terms of assembly, the complex is composed of six subunits: RnfA, RnfB, RnfC, RnfD, RnfE and RnfG.

The protein localises to the cell inner membrane. Its function is as follows. Part of a membrane-bound complex that couples electron transfer with translocation of ions across the membrane. The protein is Ion-translocating oxidoreductase complex subunit E of Pasteurella multocida (strain Pm70).